We begin with the raw amino-acid sequence, 86 residues long: Small ribosomal subunit protein bS18 (86 aa).

This sequence belongs to the bacterial ribosomal protein bS18 family. Part of the 30S ribosomal subunit. Forms a tight heterodimer with protein bS6.

Binds as a heterodimer with protein bS6 to the central domain of the 16S rRNA, where it helps stabilize the platform of the 30S subunit. The sequence is that of Small ribosomal subunit protein bS18 from Protochlamydia amoebophila (strain UWE25).